The chain runs to 157 residues: Phospholipase A2 phaiodactylipin (157 aa).

Ca(2+)-binding residues include W34 and G36. 5 disulfides stabilise this stretch: C35/C56, C55/C94, C62/C87, C85/C127, and C132/C143. N-linked (GlcNAc...) asparagine glycosylation is present at N43. H59 is an active-site residue. Residue D60 participates in Ca(2+) binding. D88 is a catalytic residue. N101 is a glycosylation site (N-linked (GlcNAc...) asparagine). Positions 134 to 139 (DEKSAR) are cleaved as a propeptide — removed in mature form. An N-linked (GlcNAc...) asparagine glycan is attached at N153.

It belongs to the phospholipase A2 family. Group III subfamily. Heterodimer composed of a small subunit and a large subunit; disulfide-linked. Ca(2+) is required as a cofactor. As to expression, expressed by the venom gland.

It is found in the secreted. The catalysed reaction is a 1,2-diacyl-sn-glycero-3-phosphocholine + H2O = a 1-acyl-sn-glycero-3-phosphocholine + a fatty acid + H(+). Functionally, scorpion venom phospholipase A2 (PLA2) that is lethal to crickets and crustaceae. Causes inflammation in mice and lysis of human erythrocytes. Has a mild anticoagulant effect on human platelets. PLA2 catalyzes the calcium-dependent hydrolysis of the 2-acyl groups in 3-sn-phosphoglycerides. The chain is Phospholipase A2 phaiodactylipin from Anuroctonus phaiodactylus (Mafia scorpion).